The chain runs to 286 residues: Pantothenate synthetase (286 aa).

Met-31 to His-38 serves as a coordination point for ATP. The active-site Proton donor is the His-38. Gln-62 provides a ligand contact to (R)-pantoate. Residue Gln-62 participates in beta-alanine binding. Residue Gly-148 to Asp-151 coordinates ATP. Gln-154 contacts (R)-pantoate. Residues Val-177 and Lys-185 to Arg-188 contribute to the ATP site.

The protein belongs to the pantothenate synthetase family. In terms of assembly, homodimer.

The protein localises to the cytoplasm. It carries out the reaction (R)-pantoate + beta-alanine + ATP = (R)-pantothenate + AMP + diphosphate + H(+). The protein operates within cofactor biosynthesis; (R)-pantothenate biosynthesis; (R)-pantothenate from (R)-pantoate and beta-alanine: step 1/1. In terms of biological role, catalyzes the condensation of pantoate with beta-alanine in an ATP-dependent reaction via a pantoyl-adenylate intermediate. This is Pantothenate synthetase from Staphylococcus carnosus (strain TM300).